Reading from the N-terminus, the 210-residue chain is Putative O-methyltransferase MSMEG_5073/MSMEI_4947 (210 aa).

Residues Val37, Glu59, 61–62 (GT), Ser67, Asp85, and Val86 contribute to the S-adenosyl-L-methionine site. Substrate is bound at residue Asp133. S-adenosyl-L-methionine is bound at residue Asp135.

It belongs to the class I-like SAM-binding methyltransferase superfamily. Cation-dependent O-methyltransferase family.

This is Putative O-methyltransferase MSMEG_5073/MSMEI_4947 from Mycolicibacterium smegmatis (strain ATCC 700084 / mc(2)155) (Mycobacterium smegmatis).